We begin with the raw amino-acid sequence, 236 residues long: 2-C-methyl-D-erythritol 4-phosphate cytidylyltransferase (236 aa).

This sequence belongs to the IspD/TarI cytidylyltransferase family. IspD subfamily. Homodimer.

It catalyses the reaction 2-C-methyl-D-erythritol 4-phosphate + CTP + H(+) = 4-CDP-2-C-methyl-D-erythritol + diphosphate. The protein operates within isoprenoid biosynthesis; isopentenyl diphosphate biosynthesis via DXP pathway; isopentenyl diphosphate from 1-deoxy-D-xylulose 5-phosphate: step 2/6. Its function is as follows. Catalyzes the formation of 4-diphosphocytidyl-2-C-methyl-D-erythritol from CTP and 2-C-methyl-D-erythritol 4-phosphate (MEP). The protein is 2-C-methyl-D-erythritol 4-phosphate cytidylyltransferase of Escherichia fergusonii (strain ATCC 35469 / DSM 13698 / CCUG 18766 / IAM 14443 / JCM 21226 / LMG 7866 / NBRC 102419 / NCTC 12128 / CDC 0568-73).